The chain runs to 731 residues: 1,4-alpha-glucan branching enzyme GlgB (731 aa).

Aspartate 408 acts as the Nucleophile in catalysis. The Proton donor role is filled by glutamate 461.

This sequence belongs to the glycosyl hydrolase 13 family. GlgB subfamily. Monomer.

The enzyme catalyses Transfers a segment of a (1-&gt;4)-alpha-D-glucan chain to a primary hydroxy group in a similar glucan chain.. It participates in glycan biosynthesis; glycogen biosynthesis. Its function is as follows. Catalyzes the formation of the alpha-1,6-glucosidic linkages in glycogen by scission of a 1,4-alpha-linked oligosaccharide from growing alpha-1,4-glucan chains and the subsequent attachment of the oligosaccharide to the alpha-1,6 position. The protein is 1,4-alpha-glucan branching enzyme GlgB of Corynebacterium glutamicum (strain ATCC 13032 / DSM 20300 / JCM 1318 / BCRC 11384 / CCUG 27702 / LMG 3730 / NBRC 12168 / NCIMB 10025 / NRRL B-2784 / 534).